A 169-amino-acid polypeptide reads, in one-letter code: Cytochrome c oxidase subunit 4 isoform 1, mitochondrial (169 aa).

The transit peptide at 1–22 directs the protein to the mitochondrion; that stretch reads MLATRALSLIGKRAISTSVCLR. Residues 23–98 lie on the Mitochondrial matrix side of the membrane; it reads AHGSVVKSED…SFAEMNKGTN (76 aa). Lysine 29 is modified (N6-acetyllysine; alternate). Position 29 is an N6-succinyllysine; alternate (lysine 29). An N6-acetyllysine modification is found at lysine 53. Phosphoserine is present on residues serine 56 and serine 58. Lysine 60 bears the N6-acetyllysine; alternate mark. Lysine 60 is subject to N6-succinyllysine; alternate. Residue lysine 67 is modified to N6-acetyllysine. The helical transmembrane segment at 99–124 threads the bilayer; sequence EWKTVVGLAMFFIGFTALVLIWEKSY. At 125–169 the chain is on the mitochondrial intermembrane side; sequence VYGPIPHTFDRDWVAMQTKRMLDMKVNPIQGFSAKWDYNKNEWKK.

The protein belongs to the cytochrome c oxidase IV family. In terms of assembly, component of the cytochrome c oxidase (complex IV, CIV), a multisubunit enzyme composed of 14 subunits. The complex is composed of a catalytic core of 3 subunits MT-CO1, MT-CO2 and MT-CO3, encoded in the mitochondrial DNA, and 11 supernumerary subunits COX4I, COX5A, COX5B, COX6A, COX6B, COX6C, COX7A, COX7B, COX7C, COX8 and NDUFA4, which are encoded in the nuclear genome. The complex exists as a monomer or a dimer and forms supercomplexes (SCs) in the inner mitochondrial membrane with NADH-ubiquinone oxidoreductase (complex I, CI) and ubiquinol-cytochrome c oxidoreductase (cytochrome b-c1 complex, complex III, CIII), resulting in different assemblies (supercomplex SCI(1)III(2)IV(1) and megacomplex MCI(2)III(2)IV(2)). Interacts with PHB2; the interaction decreases in absence of SPHK2. Interacts with AFG1L. Interacts with ABCB7; this interaction allows the regulation of cellular iron homeostasis and cellular reactive oxygen species (ROS) levels in cardiomyocytes. Interacts with FLVCR2; this interaction occurs in the absence of heme and is disrupted upon heme binding. Interacts with IRGC.

It localises to the mitochondrion inner membrane. Its pathway is energy metabolism; oxidative phosphorylation. Component of the cytochrome c oxidase, the last enzyme in the mitochondrial electron transport chain which drives oxidative phosphorylation. The respiratory chain contains 3 multisubunit complexes succinate dehydrogenase (complex II, CII), ubiquinol-cytochrome c oxidoreductase (cytochrome b-c1 complex, complex III, CIII) and cytochrome c oxidase (complex IV, CIV), that cooperate to transfer electrons derived from NADH and succinate to molecular oxygen, creating an electrochemical gradient over the inner membrane that drives transmembrane transport and the ATP synthase. Cytochrome c oxidase is the component of the respiratory chain that catalyzes the reduction of oxygen to water. Electrons originating from reduced cytochrome c in the intermembrane space (IMS) are transferred via the dinuclear copper A center (CU(A)) of subunit 2 and heme A of subunit 1 to the active site in subunit 1, a binuclear center (BNC) formed by heme A3 and copper B (CU(B)). The BNC reduces molecular oxygen to 2 water molecules using 4 electrons from cytochrome c in the IMS and 4 protons from the mitochondrial matrix. The sequence is that of Cytochrome c oxidase subunit 4 isoform 1, mitochondrial (Cox4i1) from Rattus norvegicus (Rat).